Consider the following 176-residue polypeptide: MLKDDMLEVALLGKTIGLKGAIKLHNRSDFPSQFKKGAKFYLTDGEILEILSFNKTNFVAVFKNYENIECAAKLTNKILYQSKEITKKTCKLGKDEFFYFEILGLEVFENEEKLGKVADIFEAGNFVFEIATDEKLIKKGFPKIFYLPYTDHFIDKISIEEGKIFSRFGFEILQNS.

The PRC barrel domain maps to 94–176; it reads KDEFFYFEIL…RFGFEILQNS (83 aa).

The protein belongs to the RimM family. As to quaternary structure, binds ribosomal protein uS19.

It is found in the cytoplasm. Functionally, an accessory protein needed during the final step in the assembly of 30S ribosomal subunit, possibly for assembly of the head region. Essential for efficient processing of 16S rRNA. May be needed both before and after RbfA during the maturation of 16S rRNA. It has affinity for free ribosomal 30S subunits but not for 70S ribosomes. The sequence is that of Ribosome maturation factor RimM from Campylobacter hominis (strain ATCC BAA-381 / DSM 21671 / CCUG 45161 / LMG 19568 / NCTC 13146 / CH001A).